A 273-amino-acid polypeptide reads, in one-letter code: Aegyptin (273 aa).

The N-terminal stretch at 1-19 is a signal peptide; it reads MKPLVKLFLLFCLVGIVLS. A disordered region spans residues 20 to 160; it reads RPMPEDEEPV…SEKNDPADTY (141 aa). The segment covering 24–62 has biased composition (acidic residues); the sequence is EDEEPVAEGGDDDASGESEGEEETTDDAGGDGGEEENEG. Positions 63–86 are enriched in basic and acidic residues; that stretch reads EEHAGDKDAGGEDTGKEENTGHDD. Residues 87–145 are compositionally biased toward acidic residues; the sequence is AGEEDAGEEDAGEEDAGEEDAGEEDAEKEEGEKEDAGDDAGSDDGEEDSTGGDEGEDNA. The mediates binding of host collagen stretch occupies residues 137–273; sequence GGDEGEDNAE…IKSCVSSKGR (137 aa). Over residues 146 to 158 the composition is skewed to basic and acidic residues; sequence EDSKGSEKNDPAD. Cystine bridges form between Cys-213/Cys-267 and Cys-235/Cys-245.

This sequence belongs to the aegyptin family. Monomer; exhibits non-globular elongated shape in solution. In terms of tissue distribution, female saliva (at protein level). Adult female salivary gland (at protein level).

It is found in the secreted. Functionally, modulates blood feeding of female mosquitoes on vertebrate hosts. Inhibits collagen-induced platelet aggregation in the host via preventing collagen interaction with its three major ligands: glycoprotein VI, integrin alpha-2/beta-1 (ITGA2/ITGB1) and von Willebrand factor (VWF). Prevents collagen-mediated thrombus formation in the host. Binds to host collagens but not to laminin, vitronectin (VTN), fibronectin (FN1), von Willebrand factor (VWF) and fibrinogen. Influences cytokine production and populations of circulating leukocytes. (Microbial infection) Reduces replication of dengue virus type 2 at inoculation site and viremia levels on day 2 post-inoculation. Promotes production of pro-inflammatory cytokines, such as GM-CSF (CSF2), IFN-gamma (IFNG), IL5 and IL6, in the lymph nodes of mice infected with dengue virus type 2. Increases the number of circulating eosinophils in mice infected with dengue virus type 2. Decreases the number of circulating monocytes in mice infected with dengue virus type 2. This Aedes aegypti (Yellowfever mosquito) protein is Aegyptin.